A 285-amino-acid chain; its full sequence is RNA polymerase sigma factor RpoH (285 aa).

The sigma-70 factor domain-2 stretch occupies residues 53–122 (LILSHLRFVA…IHEYVLRNWR (70 aa)). An Interaction with polymerase core subunit RpoC motif is present at residues 77–80 (DLIQ). The interval 229-281 (ALEGLDERSQHIIRARWLDDDNKSTLQELADQYGVSAERVRQLEKNAMKKLKM) is sigma-70 factor domain-4. Positions 254-273 (LQELADQYGVSAERVRQLEK) form a DNA-binding region, H-T-H motif.

This sequence belongs to the sigma-70 factor family. RpoH subfamily. As to quaternary structure, interacts with the RNA polymerase core enzyme.

It is found in the cytoplasm. Its function is as follows. Sigma factors are initiation factors that promote the attachment of RNA polymerase to specific initiation sites and are then released. This sigma factor is involved in regulation of expression of heat shock genes. This chain is RNA polymerase sigma factor RpoH, found in Serratia marcescens.